The primary structure comprises 715 residues: Putative macrophage stimulating 1-like protein (715 aa).

The first 20 residues, 1–20 (MAPAPVTLLAPGAASSMSCS), serve as a signal peptide directing secretion. Residues 21–110 (QPGQRSPSND…GRCDLFQEKG (90 aa)) form the PAN domain. Kringle domains are found at residues 63–156 (GRCG…IKSC), 160–238 (ACVW…LPRC), 252–345 (SCFR…IRRC), and 353–464 (DCYH…LRRC). 12 disulfide bridges follow: C127/C151, C161/C238, C182/C221, C210/C233, C253/C345, C316/C339, C354/C464, C375/C447, C511/C527, C606/C671, C636/C650, and C661/C689. In terms of domain architecture, Peptidase S1 spans 488 to 713 (VAGGHPGNSP…FVDWIHKVMR (226 aa)).

The protein belongs to the peptidase S1 family. Plasminogen subfamily.

It localises to the secreted. In Homo sapiens (Human), this protein is Putative macrophage stimulating 1-like protein (MST1L).